Reading from the N-terminus, the 624-residue chain is Methyl-accepting chemotaxis protein McpG (624 aa).

The chain crosses the membrane as a helical span at residues 11–31 (ILLAASLIVILAFSLFTLYND). In terms of domain architecture, Cache spans 36-254 (NAIREDLENY…GLPSANWYIG (219 aa)). A helical transmembrane segment spans residues 272–292 (SAVIATVVAVVIIIGLLGLLI). The region spanning 293-347 (RVLMQPLHTMTRAMEDIAEGEGDLTKRLHIHSHDEFGVLGNAFNRFVERIHSSIR) is the HAMP domain. The Methyl-accepting transducer domain occupies 352 to 588 (ATEQVNEVAL…AINMDINEIN (237 aa)).

The protein belongs to the methyl-accepting chemotaxis (MCP) protein family.

The protein localises to the cell membrane. Chemotactic-signal transducers respond to changes in the concentration of attractants and repellents in the environment, transduce a signal from the outside to the inside of the cell, and facilitate sensory adaptation through the variation of the level of methylation. McpG is a specific gamma-aminobutyric acid (GABA) chemoreceptor that recognizes GABA over a wide range of environmental conditions. Contributes to attraction to and colonization of plant roots. This is Methyl-accepting chemotaxis protein McpG from Pseudomonas putida (strain ATCC 47054 / DSM 6125 / CFBP 8728 / NCIMB 11950 / KT2440).